Here is a 279-residue protein sequence, read N- to C-terminus: uncharacterized protein (279 aa).

Residues 1 to 31 form the signal peptide; that stretch reads MLVQSRTLVTAILSCSLVFGTTVNGASVAIA.

This is an uncharacterized protein from Corynebacterium glutamicum (strain ATCC 13032 / DSM 20300 / JCM 1318 / BCRC 11384 / CCUG 27702 / LMG 3730 / NBRC 12168 / NCIMB 10025 / NRRL B-2784 / 534).